We begin with the raw amino-acid sequence, 101 residues long: MRKALLISLILPILIGGLVAAAQAPQDTPQGFMGINIGAGLAVGLAAIGAGVAVGTAAAAGIGVLTEKREMFGTVLIFVAIGEGIAVYGIIFAVLMLFAGI.

A run of 3 helical transmembrane segments spans residues Ala-4–Ala-24, Phe-32–Val-52, and Val-75–Leu-95.

This sequence belongs to the V-ATPase proteolipid subunit family. Has multiple subunits with at least A(3), B(3), C, D, E, F, H, I and proteolipid K(x).

The protein localises to the cell membrane. Component of the A-type ATP synthase that produces ATP from ADP in the presence of a proton gradient across the membrane. The protein is A-type ATP synthase subunit K of Sulfolobus acidocaldarius (strain ATCC 33909 / DSM 639 / JCM 8929 / NBRC 15157 / NCIMB 11770).